Here is a 107-residue protein sequence, read N- to C-terminus: Flagellar transcriptional regulator FlhD (107 aa).

This sequence belongs to the FlhD family. In terms of assembly, homodimer; disulfide-linked. Forms a heterohexamer composed of two FlhC and four FlhD subunits. Each FlhC binds a FlhD dimer, forming a heterotrimer, and a hexamer assembles by dimerization of two heterotrimers.

The protein resides in the cytoplasm. In terms of biological role, functions in complex with FlhC as a master transcriptional regulator that regulates transcription of several flagellar and non-flagellar operons by binding to their promoter region. Activates expression of class 2 flagellar genes, including fliA, which is a flagellum-specific sigma factor that turns on the class 3 genes. Also regulates genes whose products function in a variety of physiological pathways. This Bordetella bronchiseptica (strain ATCC BAA-588 / NCTC 13252 / RB50) (Alcaligenes bronchisepticus) protein is Flagellar transcriptional regulator FlhD.